A 375-amino-acid polypeptide reads, in one-letter code: Putative glutamate--cysteine ligase 2 (375 aa).

The protein belongs to the glutamate--cysteine ligase type 2 family. YbdK subfamily.

The enzyme catalyses L-cysteine + L-glutamate + ATP = gamma-L-glutamyl-L-cysteine + ADP + phosphate + H(+). In terms of biological role, ATP-dependent carboxylate-amine ligase which exhibits weak glutamate--cysteine ligase activity. In Sorangium cellulosum (strain So ce56) (Polyangium cellulosum (strain So ce56)), this protein is Putative glutamate--cysteine ligase 2.